The following is a 145-amino-acid chain: Large ribosomal subunit protein uL15 (145 aa).

The tract at residues 20-39 (GRVGKHRKHPSGRGNAGGEH) is disordered.

Belongs to the universal ribosomal protein uL15 family.

The protein is Large ribosomal subunit protein uL15 (RPL27A) of Trypanosoma brucei brucei.